A 55-amino-acid polypeptide reads, in one-letter code: MVSKSTIDPEVIEKIISSLETLDFGTVQITVHDSQITQIEKIEKHRFSLKRKESK.

This is an uncharacterized protein from Bacillus subtilis (strain 168).